Here is a 519-residue protein sequence, read N- to C-terminus: Circadian clock oscillator protein KaiC (519 aa).

The 247-residue stretch at 1–247 (MTSAEMTSPN…TITDHGINIF (247 aa)) folds into the KaiC 1 domain. Gly49, Thr50, Gly51, Lys52, Thr53, and Leu54 together coordinate ATP. Residue Thr53 participates in Mg(2+) binding. The active-site Proton acceptor in CI (KaiC 1) is Glu77. ATP is bound at residue Ser89. The interval 115 to 122 (QEVVGGFD) is B-loop, required to bind KaiB and SasA. Residues Lys224, Leu225, Arg226, Thr228, His230, Thr240, and Asp241 each contribute to the ATP site. The segment at 248-260 (PLGAMRLTQRSSN) is linker. The KaiC 2 domain maps to 261-519 (VRVSSGVVRL…RGVQEKGPES (259 aa)). ATP contacts are provided by Thr290, Gly291, Thr292, Gly293, Lys294, Thr295, and Leu296. Position 295 (Thr295) interacts with Mg(2+). Glu318 is a Mg(2+) binding site. The Proton acceptor in CII (KaiC 2) role is filled by Glu318. Trp331 lines the ATP pocket. Ser431 carries the post-translational modification Phosphoserine; by autocatalysis. Residue Thr432 is modified to Phosphothreonine; by autocatalysis. ATP is bound by residues Arg451, Lys457, Met458, Arg459, Ser461, His463, and Lys465. Positions 488–497 (RIISGSPTRI) are A-loop, interacts with KaiA.

The protein belongs to the KaiC family. Homohexamer resembling 2 stacked donuts with a central pore nearly blocked on one side; hexamerization is dependent on ATP-binding. Binds 12 ATP; 6 between each subunit in both layers. KaiB only binds to phospho-Ser-431 KaiC (not doubly phosphorylated KaiC). Complex formation between KaiB and KaiC is regulated by the phosphorylation state of KaiC and by an ATP hydrolysis-driven conformation change in the CI ring of KaiC; complex formation is slow. Slow complex formation is crucial for the timing of the circadian period. KaiB switches to a thioredoxin-like form called KaiB(fs) when bound to KaiC. The KaiABC complex composition changes during the circadian cycle to control KaiC phosphorylation. Complexes KaiC(6), KaiA(2-4):KaiC(6), KaiB(6):KaiC(6) and KaiC(6):KaiB(6):KaiA(12) are among the most important forms, many form cooperatively. Interacts directly with KaiB and SasA. The CI domain binds to KaiB and SasA; as they have a similar fold they compete for the same site on CI. CikA interacts with this protein in the clock complex. Binds to the C-terminus of KaiA via a coiled-coil structure. Forms KaiC(6):KaiB(1) and KaiC(6):KaiB(6) complexes. Mg(2+) serves as cofactor. Post-translationally, has a 4 step phosphorylation cycle; the autokinase acts first on Thr-432, then Ser-431. When Ser-431 is modified KaiC switches to an autophosphatase mode, acting first on phospho-Thr-432 then phospho-Ser-431. Phosphorylated and dephosphorylated on serine/threonine residues by autocatalysis. Unphosphorylated, mono- and di-phosphorylated forms exist. The phosphorylated form correlates with clock speed. The presence of KaiA increases phosphorylation and stabilizes these forms. Phosphorylated on serine and threonine residues by autocatalysis. Has a 4 step phosphorylation cycle; the autokinase acts first on Thr-432, then Ser-431. When Ser-431 is modified KaiC switches to an autophosphatase mode, acting first on phospho-Thr-432 then phospho-Ser-431.

It carries out the reaction L-seryl-[protein] + ATP = O-phospho-L-seryl-[protein] + ADP + H(+). The enzyme catalyses L-threonyl-[protein] + ATP = O-phospho-L-threonyl-[protein] + ADP + H(+). The catalysed reaction is ATP + H2O = ADP + phosphate + H(+). Its activity is regulated as follows. Interaction with KaiA stimulates autophosphorylation, KaiC interaction with KaiB sequesters KaiA, preventing it stimulating the KaiC kinase, leading to autodephosphorylation. A KaiA dimer is sufficient to enhance KaiC phosphorylation. Interaction of KaiA with the A-loop stimulates autokinase activity. Its function is as follows. The KaiABC oscillator complex constitutes the main circadian regulator in cyanobacteria. Complex composition changes during the circadian cycle to control KaiC phosphorylation; KaiA stimulates KaiC autophosphorylation, while KaiB sequesters KaiA, leading to KaiC autodephosphorylation. The Kai complex controls chromosome condensation, leading to a transcription accessible chromosome during the first half of the circadian cycle and a compact, less transcription-accessible chromosome during the latter half. Clock output pathways impact the RpaA transcriptional regulator. Circadian oscillations can be generated in vitro by incubating KaiA, KaiB and KaiC with 1 mM ATP. The cycle is self-sustainable for at least 3 cycles and resistant to temperature changes. Mutations in KaiC alone prolong or reduce the circadian rhythm. A very robust clock is reconstituted with KaiA, KaiB, KaiC, SasA, CikA and RpaA; output is measured by transcription from an appropriate reporter. The level of KaiC phosphorylation and KaiC ATPase activity represent the key features of the biochemical oscillator. KaiA homodimer binding to the KaiC CII domain stimulates KaiC's ATPase activity and forms KaiA(2-4):KaiC(6) complexes, which stimulate KaiC autophosphorylation first on Thr-432 then Ser-431. Phospho-Ser-431-KaiC accumulation triggers binding of KaiB to CI to form the KaiB(6):KaiC(6) complex, leading to changes in the output regulators CikA and SasA. KaiB(6):KaiC(6) formation exposes a site for KaiA binding that sequesters KaiA from the CII domain, making the KaiC(6):KaiB(6):KaiA(12) complex that results in KaiC autodephosphorylation. Complete dephosphorylation of KaiC leads to dissociation of KaiA(2):KaiB(1), completing 1 cycle of the Kai oscillator. Functionally, has a weak, temperature-independent ATPase activity (about 15 molecules of ATP per day); the addition of KaiA and KaiB increases activity slightly and makes the activity oscillate with a circadian period in vitro for over 60 hours. ATPase activity defines the circadian period. The phosphorylation state of KaiC modulates its ATPase activity and effects KaiB binding. In terms of biological role, there are several clock output pathways; SasA/RpaA, CikA/RpaA and LabA. KaiC enhances the autophosphorylation activity of SasA, which then transfers its phosphate group to RpaA to activate it. Phosphotransfer is maximal when KaiC phosphorylation is active during the circadian cycle. KaiB and KaiC together enhance the phosphatase activity of CikA on phospho-RpaA. Its function is as follows. KaiC is important for metabolic partitioning during the dark to light shift, modulating the balance between the Calvin cycle and oxidative pentose phosphate pathway under natural growth conditions. The sequence is that of Circadian clock oscillator protein KaiC from Synechococcus elongatus (strain ATCC 33912 / PCC 7942 / FACHB-805) (Anacystis nidulans R2).